We begin with the raw amino-acid sequence, 332 residues long: RING finger protein 225 (332 aa).

The tract at residues 1 to 55 (MPCPRLPWLRRHRTSQGSGPSSPSTVSAPNSPSRGEDEDAEEEEGDGTPGSGPIL) is disordered. The segment covering 15–27 (SQGSGPSSPSTVS) has biased composition (low complexity). Acidic residues predominate over residues 36-46 (EDEDAEEEEGD). The segment at 63-111 (CLICVSPFDGIFKLPKRLDCGHVFCLECLARLSLATAGGGDAVACPMCR) adopts an RING-type zinc-finger fold. The tract at residues 121–187 (GLPALPTQPG…PPPLRLGRPL (67 aa)) is disordered. Residues 205 to 225 (ALAVLVAAGLVVSGVYIFFLI) form a helical membrane-spanning segment. The tract at residues 259–332 (THAWTRRPTK…ADGKKVQLQQ (74 aa)) is disordered. Basic and acidic residues-rich tracts occupy residues 280–295 (ATKDTPELEEATKDPV) and 323–332 (ADGKKVQLQQ).

It is found in the membrane. The polypeptide is RING finger protein 225 (Mus musculus (Mouse)).